The sequence spans 227 residues: MNRLLICQNITKHYQEGSLQTQVLKEVSFSMQEGELIAIVGSSGSGKSTLLHMLGGLDQPTSGEVFIHGQSLQRATQDELAKLRNQYLGFVYQFHHLMADFTALENVMMPMLISHKNKTEAKDRAENILSAVGLAKRILHKPSALSGGERQRVAIARSLVNNPKLVLADEPTGNLDHKTTESIFELIQKLNQEQKIAFLLVTHDLQLAEKLGRRLVMQDGILRESNS.

The ABC transporter domain maps to 5–227; that stretch reads LICQNITKHY…QDGILRESNS (223 aa). ATP is bound at residue 41–48; it reads GSSGSGKS.

Belongs to the ABC transporter superfamily. Lipoprotein translocase (TC 3.A.1.125) family. As to quaternary structure, the complex is composed of two ATP-binding proteins (LolD) and two transmembrane proteins (LolC and LolE).

Its subcellular location is the cell inner membrane. Functionally, part of the ABC transporter complex LolCDE involved in the translocation of mature outer membrane-directed lipoproteins, from the inner membrane to the periplasmic chaperone, LolA. Responsible for the formation of the LolA-lipoprotein complex in an ATP-dependent manner. The polypeptide is Lipoprotein-releasing system ATP-binding protein LolD (Histophilus somni (strain 129Pt) (Haemophilus somnus)).